Reading from the N-terminus, the 347-residue chain is NADH-ubiquinone oxidoreductase chain 2 (347 aa).

The next 11 membrane-spanning stretches (helical) occupy residues 3-23 (PPILFTILLTVISGTMIVLMS), 25-45 (HWLMIWIGFEMNTLAIIPILM), 59-79 (YFLTQATASMILMMGITINLM), 96-116 (TMMTIALAMKLGLAPFHFWVP), 122-142 (VHMSSGLILLTWQKIAPLLVL), 149-169 (IDPNLLLPMAMMSVLIGGWGG), 178-198 (ILAYSSIAHMGWMATITLYNP), 200-220 (MMLLNLTIYIIMTLTTFMLFM), 242-262 (SLILMLMLSLGGLPPLSGFIP), 274-294 (EMIIMPTLLAITALLNLYFYM), and 323-343 (MILLPPLTVISTMLLPITPLL).

Belongs to the complex I subunit 2 family. Core subunit of respiratory chain NADH dehydrogenase (Complex I) which is composed of 45 different subunits. Interacts with TMEM242.

The protein localises to the mitochondrion inner membrane. It catalyses the reaction a ubiquinone + NADH + 5 H(+)(in) = a ubiquinol + NAD(+) + 4 H(+)(out). Core subunit of the mitochondrial membrane respiratory chain NADH dehydrogenase (Complex I) that is believed to belong to the minimal assembly required for catalysis. Complex I functions in the transfer of electrons from NADH to the respiratory chain. The immediate electron acceptor for the enzyme is believed to be ubiquinone. This Suricata suricatta (Meerkat) protein is NADH-ubiquinone oxidoreductase chain 2.